A 449-amino-acid chain; its full sequence is MRECISVHIGQAGVQIGNACWELYCLEHGIQPDGHMPSDKTVGGGDDSFSTFFSETGAGKHVPRAVFVDLEPTVVDEVRTGTYRQLFHPEQLITGKEDAANNYARGHYTIGKEIVDVVLDRIRKLADQCTGLQGFLVFHSFGGGTGSGFTSLLMERLSVDYGKKSKLEFSIYPAPQVSTAVVEPYNSILTTHTTLEHSDCAFMVDNEAIYDICRRNLDIERPTYMNLNRLIGQIVSSITASLRFDGALNVDLTEFQTNLVPYPRIHFPLATYAPVISVEKAYHEQLTVAEITNACFEPANQMVKCDPRRGKYMACCMLYRGDVVPKDVNAAIATIKTKRSIQFVDWCPTGFKVGINYQPPTVVPGGDLAKVQRAVCMLSNTTAIAEAWARLDHKFDLMYAKRAFVHWYVGEGMEEGEFAEAREDLAALEKDYEEVGIDSTTELGEDEEY.

Gln11 lines the GTP pocket. Lys40 is subject to N6-acetyllysine. Residues Glu71, Ser140, Gly144, Thr145, Thr179, Asn206, and Asn228 each contribute to the GTP site. Glu71 lines the Mg(2+) pocket. Glu254 is an active-site residue.

It belongs to the tubulin family. As to quaternary structure, dimer of alpha and beta chains. A typical microtubule is a hollow water-filled tube with an outer diameter of 25 nm and an inner diameter of 15 nM. Alpha-beta heterodimers associate head-to-tail to form protofilaments running lengthwise along the microtubule wall with the beta-tubulin subunit facing the microtubule plus end conferring a structural polarity. Microtubules usually have 13 protofilaments but different protofilament numbers can be found in some organisms and specialized cells. The cofactor is Mg(2+). Post-translationally, undergoes a tyrosination/detyrosination cycle, the cyclic removal and re-addition of a C-terminal tyrosine residue by the enzymes tubulin tyrosine carboxypeptidase (TTCP) and tubulin tyrosine ligase (TTL), respectively. Acetylation of alpha chains at Lys-40 stabilizes microtubules and affects affinity and processivity of microtubule motors. This modification has a role in multiple cellular functions, ranging from cell motility, cell cycle progression or cell differentiation to intracellular trafficking and signaling. During the early stages of oogenesis lky/Alpha-tubulin N-acetyltransferase 2 is the main acetyltransferase responsible for Lys-40 acetylation in germline cells while Atat/alpha-tubulin N-acetyltransferase 1 is the main acetyltransferase responsible for Lys-40 acetylation in somatic cells.

The protein resides in the cytoplasm. The protein localises to the cytoskeleton. It catalyses the reaction GTP + H2O = GDP + phosphate + H(+). Its function is as follows. Tubulin is the major constituent of microtubules, a cylinder consisting of laterally associated linear protofilaments composed of alpha- and beta-tubulin heterodimers. Microtubules grow by the addition of GTP-tubulin dimers to the microtubule end, where a stabilizing cap forms. Below the cap, tubulin dimers are in GDP-bound state, owing to GTPase activity of alpha-tubulin. The protein is Tubulin alpha-2 chain (alphaTub85E) of Drosophila melanogaster (Fruit fly).